A 239-amino-acid polypeptide reads, in one-letter code: Small ribosomal subunit protein uS2 (239 aa).

This sequence belongs to the universal ribosomal protein uS2 family.

In Lysinibacillus sphaericus (strain C3-41), this protein is Small ribosomal subunit protein uS2.